A 380-amino-acid polypeptide reads, in one-letter code: Lipid-A-disaccharide synthase (380 aa).

This sequence belongs to the LpxB family.

The catalysed reaction is a lipid X + a UDP-2-N,3-O-bis[(3R)-3-hydroxyacyl]-alpha-D-glucosamine = a lipid A disaccharide + UDP + H(+). Its pathway is bacterial outer membrane biogenesis; LPS lipid A biosynthesis. Functionally, condensation of UDP-2,3-diacylglucosamine and 2,3-diacylglucosamine-1-phosphate to form lipid A disaccharide, a precursor of lipid A, a phosphorylated glycolipid that anchors the lipopolysaccharide to the outer membrane of the cell. This Pseudomonas syringae pv. tomato (strain ATCC BAA-871 / DC3000) protein is Lipid-A-disaccharide synthase.